A 206-amino-acid chain; its full sequence is Protein Nef (206 aa).

The N-myristoyl glycine; by host moiety is linked to residue glycine 2. At serine 6 the chain carries Phosphoserine; by host. The interval 62 to 65 (EEEK) is acidic; interacts with host PACS1 and PACS2; stabilizes the interaction of NEF/MHC-I with host AP1M1; necessary for MHC-I internalization. The interval 69 to 78 (PVTPQVPLRP) is SH3-binding; interaction with Src family tyrosine kinases. The PxxP; stabilizes the interaction of NEF/MHC-I with host AP1M1; necessary for MHC-I internalization motif lies at 72 to 75 (PQVP). The tract at residues 108–124 (DILDLWIYHTQGYFPDW) is mediates dimerization, Nef-PTE1 interaction. The segment at 148 to 180 (VEPEKLEEANKGENTSLLHPVSLHGMDDPEREV) is binding to ATP6V1H. The Dileucine internalization motif; necessary for CD4 internalization motif lies at 164–165 (LL). The Diacidic; necessary for CD4 internalization motif lies at 174 to 175 (DD).

This sequence belongs to the lentivirus primate group Nef protein family. In terms of assembly, monomer; cytosolic form. Homodimer; membrane bound form. Interacts with Nef associated p21-activated kinase (PAK2); this interaction activates PAK2. Associates with the Nef-MHC-I-AP1 complex; this complex is required for MHC-I internalization. Interacts (via C-terminus) with host PI3-kinase. Interacts with host PACS1; this interaction seems to be weak. Interacts with host PACS2. Interacts with host LCK and MAPK3; these interactions inhibit the kinase activity of the latter. Interacts with host ATP6V1H; this interaction may play a role in CD4 endocytosis. Associates with the CD4-Nef-AP2 complex; this complex is required for CD4 internalization. Interacts with host AP2 subunit alpha and AP2 subunit sigma2. Interacts with TCR-zeta chain; this interaction up-regulates the Fas ligand (FasL) surface expression. Interacts with host HCK, LYN, and SRC; these interactions activate the Src family kinases. Interacts with MAP3K5; this interaction inhibits the Fas and TNFR-mediated death signals. Interacts with beta-COP and PTE1. Interacts with human RACK1; this increases Nef phosphorylation by PKC. Interacts with TP53; this interaction decreases the half-life of TP53, protecting the infected cell against p53-mediated apoptosis. In terms of processing, the virion-associated Nef proteins are cleaved by the viral protease to release the soluble C-terminal core protein. Nef is probably cleaved concomitantly with viral structural proteins on maturation of virus particles. Post-translationally, myristoylated. Phosphorylated on serine residues, probably by host PKCdelta and theta.

It is found in the host cell membrane. The protein localises to the virion. The protein resides in the secreted. Its subcellular location is the host Golgi apparatus membrane. Functionally, factor of infectivity and pathogenicity, required for optimal virus replication. Alters numerous pathways of T-lymphocyte function and down-regulates immunity surface molecules in order to evade host defense and increase viral infectivity. Alters the functionality of other immunity cells, like dendritic cells, monocytes/macrophages and NK cells. In infected CD4(+) T-lymphocytes, down-regulates the surface MHC-I, mature MHC-II, CD4, CD28, CCR5 and CXCR4 molecules. Mediates internalization and degradation of host CD4 through the interaction of with the cytoplasmic tail of CD4, the recruitment of AP-2 (clathrin adapter protein complex 2), internalization through clathrin coated pits, and subsequent transport to endosomes and lysosomes for degradation. Diverts host MHC-I molecules to the trans-Golgi network-associated endosomal compartments by an endocytic pathway to finally target them for degradation. MHC-I down-regulation may involve AP-1 (clathrin adapter protein complex 1) or possibly Src family kinase-ZAP70/Syk-PI3K cascade recruited by PACS2. In consequence infected cells are masked for immune recognition by cytotoxic T-lymphocytes. Decreasing the number of immune receptors also prevents reinfection by more HIV particles (superinfection). Down-regulates host SERINC3 and SERINC5 thereby excluding these proteins from the viral particles. Virion infectivity is drastically higher when SERINC3 or SERINC5 are excluded from the viral envelope, because these host antiviral proteins impair the membrane fusion event necessary for subsequent virion penetration. In terms of biological role, bypasses host T-cell signaling by inducing a transcriptional program nearly identical to that of anti-CD3 cell activation. Interaction with TCR-zeta chain up-regulates the Fas ligand (FasL). Increasing surface FasL molecules and decreasing surface MHC-I molecules on infected CD4(+) cells send attacking cytotoxic CD8+ T-lymphocytes into apoptosis. Its function is as follows. Plays a role in optimizing the host cell environment for viral replication without causing cell death by apoptosis. Protects the infected cells from apoptosis in order to keep them alive until the next virus generation is ready to strike. Inhibits the Fas and TNFR-mediated death signals by blocking MAP3K5/ASK1. Decreases the half-life of TP53, protecting the infected cell against p53-mediated apoptosis. Inhibits the apoptotic signals regulated by the Bcl-2 family proteins through the formation of a Nef/PI3-kinase/PAK2 complex that leads to activation of PAK2 and induces phosphorylation of host BAD. Functionally, extracellular Nef protein targets CD4(+) T-lymphocytes for apoptosis by interacting with CXCR4 surface receptors. The protein is Protein Nef of Homo sapiens (Human).